Reading from the N-terminus, the 729-residue chain is MAAGVEAAAEVAATEPKMEEESGAPCVPSGNGAPGPKGEERPTQNEKRKEKNIKRGGNRFEPYSNPTKRYRAFITNIPFDVKWQSLKDLVKEKVGEVTYVELLMDAEGKSRGCAVVEFKMEESMKKAAEVLNKHSLSGRPLKVKEDPDGEHARRAMQKVMATTGGMGMGPGGPGMINIPPSILNNPNIPNEIIHALQAGRLGSTVFVANLDYKVGWKKLKEVFSMAGVVVRADILEDKDGKSRGIGIVTFEQSIEAVQAISMFNGQLLFDRPMHVKMDERALPKGDFFPPERPQQLPHGLGGIGMGLGPGGQPIDANHLSKGIGMGNLGPAGMGMEGIGFGINKIGGMEGPFGGGMENMGRFGSGMNMGRINEILSNALKRGEIIAKQGGGGAGGSVPGIERMGPGIDRISGAGMERMGAGLGHGMDRVGSEIERMGLVMDRMGSVERMGSSIERMGPLGLDHMASSIERMGQTMERIGSGVERMGAGMGFGLERMAAPIDRVGQTIERMGSGVERMGPAIERMGLSMDRMVPTGMGASLERMGPVMDRMATGLERMGANNLERMGLERMGANSLERMGLERMGANSLERMGPAMGPALGAGIERMGLAMGGAGGASFDRAIEMERGNFGGSFAGSFGGAGGHAPGVARKACQIFVRNLPFDFTWKMLKDKFNECGHVLYADIKMENGKSKGCGVVKFESPEVAERACRMMNGMKLSGREIDVRIDRNA.

Positions 1–13 (MAAGVEAAAEVAA) are enriched in low complexity. Residues 1-65 (MAAGVEAAAE…GGNRFEPYSN (65 aa)) are disordered. Ala2 carries the post-translational modification N-acetylalanine. Lys17 is covalently cross-linked (Glycyl lysine isopeptide (Lys-Gly) (interchain with G-Cter in SUMO2)). At Ser29 the chain carries Phosphoserine. Glycyl lysine isopeptide (Lys-Gly) (interchain with G-Cter in SUMO2) cross-links involve residues Lys37, Lys68, and Lys82. Over residues 37 to 49 (KGEERPTQNEKRK) the composition is skewed to basic and acidic residues. 2 RRM domains span residues 70 to 148 (YRAF…EDPD) and 203 to 280 (STVF…MDER). A Phosphoserine modification is found at Ser85. Glycyl lysine isopeptide (Lys-Gly) (interchain with G-Cter in SUMO2) cross-links involve residues Lys87 and Lys126. Lys133 carries the N6-acetyllysine; alternate modification. Lys133 is covalently cross-linked (Glycyl lysine isopeptide (Lys-Gly) (interchain with G-Cter in SUMO2); alternate). Residues Lys142 and Lys144 each participate in a glycyl lysine isopeptide (Lys-Gly) (interchain with G-Cter in SUMO2) cross-link. Ser203 is modified (phosphoserine). Lys220 is covalently cross-linked (Glycyl lysine isopeptide (Lys-Gly) (interchain with G-Cter in SUMO2)). Lys276 is subject to N6-acetyllysine; alternate. Lys276 is covalently cross-linked (Glycyl lysine isopeptide (Lys-Gly) (interchain with G-Cter in SUMO2); alternate). Glycyl lysine isopeptide (Lys-Gly) (interchain with G-Cter in SUMO2) cross-links involve residues Lys284 and Lys344. Ser364 and Ser376 each carry phosphoserine. Glycyl lysine isopeptide (Lys-Gly) (interchain with G-Cter in SUMO2) cross-links involve residues Lys380 and Lys387. A Phosphoserine modification is found at Ser396. Tandem repeats lie at residues 399–404 (GIERMG), 406–411 (GIDRIS), 414–419 (GMERMG), and 425–430 (GMDRVG). The 27 X 6 AA repeats of [GEVSTPAN]-[ILMV]-[DE]-[RH]-[MLVI]-[GAV] stretch occupies residues 399–607 (GIERMGPGID…ALGAGIERMG (209 aa)). Ser431 is modified (phosphoserine). Repeat copies occupy residues 432 to 437 (EIERMG), 439 to 444 (VMDRMG), and 445 to 450 (SVERMG). At Ser451 the chain carries Phosphoserine. Repeat copies occupy residues 452–457 (SIERMG), 460–465 (GLDHMA), 467–472 (SIERMG), and 474–479 (TMERIG). A Phosphoserine modification is found at Ser467. The residue at position 480 (Ser480) is a Phosphoserine. 16 tandem repeats follow at residues 481-486 (GVERMG), 492-497 (GLERMA), 499-504 (PIDRVG), 506-511 (TIERMG), 513-518 (GVERMG), 520-525 (AIERMG), 527-532 (SMDRMV), 539-544 (SLERMG), 546-551 (VMDRMA), 553-558 (GLERMG), 561-566 (NLERMG), 567-571 (LERMG), 574-579 (SLERMG), 580-584 (LERMG), 587-592 (SLERMG), and 602-607 (GIERMG). Arg495 carries the omega-N-methylarginine modification. Ser527 bears the Phosphoserine mark. Residue Ser574 is modified to Phosphoserine. At Ser587 the chain carries Phosphoserine. Residues Ser617, Ser632, and Ser636 each carry the phosphoserine modification. Lys650 participates in a covalent cross-link: Glycyl lysine isopeptide (Lys-Gly) (interchain with G-Cter in SUMO2). Residues 652 to 728 (CQIFVRNLPF…REIDVRIDRN (77 aa)) enclose the RRM 3 domain. Thr664 carries the phosphothreonine modification. Lys666 is covalently cross-linked (Glycyl lysine isopeptide (Lys-Gly) (interchain with G-Cter in SUMO2)). Lys671 carries the N6-acetyllysine modification. Glycyl lysine isopeptide (Lys-Gly) (interchain with G-Cter in SUMO2) cross-links involve residues Lys684 and Lys691. Lys697 is modified (N6-acetyllysine; alternate). Residue Lys697 forms a Glycyl lysine isopeptide (Lys-Gly) (interchain with G-Cter in SUMO2); alternate linkage. A Glycyl lysine isopeptide (Lys-Gly) (interchain with G-Cter in SUMO1); alternate cross-link involves residue Lys697. Ser700 bears the Phosphoserine mark. Lys715 is covalently cross-linked (Glycyl lysine isopeptide (Lys-Gly) (interchain with G-Cter in SUMO2)).

As to quaternary structure, identified in the spliceosome C complex. Interacts with PPIA/CYPA. Sumoylated.

Its subcellular location is the nucleus. In terms of biological role, pre-mRNA binding protein in vivo, binds avidly to poly(G) and poly(U) RNA homopolymers in vitro. Involved in splicing. Acts as a receptor for carcinoembryonic antigen in Kupffer cells, may initiate a series of signaling events leading to tyrosine phosphorylation of proteins and induction of IL-1 alpha, IL-6, IL-10 and tumor necrosis factor alpha cytokines. The chain is Heterogeneous nuclear ribonucleoprotein M (Hnrnpm) from Mus musculus (Mouse).